The sequence spans 132 residues: Small ribosomal subunit protein uS9 (132 aa).

The protein belongs to the universal ribosomal protein uS9 family.

In Blochmanniella pennsylvanica (strain BPEN), this protein is Small ribosomal subunit protein uS9.